The chain runs to 513 residues: ATP synthase subunit alpha (513 aa).

169-176 (GDRQTGKT) contacts ATP.

Belongs to the ATPase alpha/beta chains family. As to quaternary structure, F-type ATPases have 2 components, CF(1) - the catalytic core - and CF(0) - the membrane proton channel. CF(1) has five subunits: alpha(3), beta(3), gamma(1), delta(1), epsilon(1). CF(0) has three main subunits: a(1), b(2) and c(9-12). The alpha and beta chains form an alternating ring which encloses part of the gamma chain. CF(1) is attached to CF(0) by a central stalk formed by the gamma and epsilon chains, while a peripheral stalk is formed by the delta and b chains.

It localises to the cell inner membrane. The enzyme catalyses ATP + H2O + 4 H(+)(in) = ADP + phosphate + 5 H(+)(out). In terms of biological role, produces ATP from ADP in the presence of a proton gradient across the membrane. The alpha chain is a regulatory subunit. In Thioalkalivibrio sulfidiphilus (strain HL-EbGR7), this protein is ATP synthase subunit alpha.